The following is a 129-amino-acid chain: KVYGRCELAAAMKRLGLDNYRGYSLGNWVCAAKFESNFNTHATNRNTDGSTDYGILQINSRWWCNDGRTPGSRNLCNIPCSALLSSDITASVNCAKKIVSDRNGMNAWVAWRNRCKGTDVHAWIRGCRL.

The C-type lysozyme domain maps to lysine 1–leucine 129. Disulfide bonds link cysteine 6–cysteine 127, cysteine 30–cysteine 115, cysteine 64–cysteine 80, and cysteine 76–cysteine 94. Catalysis depends on residues glutamate 35 and aspartate 52.

It belongs to the glycosyl hydrolase 22 family. Monomer.

The protein localises to the secreted. The catalysed reaction is Hydrolysis of (1-&gt;4)-beta-linkages between N-acetylmuramic acid and N-acetyl-D-glucosamine residues in a peptidoglycan and between N-acetyl-D-glucosamine residues in chitodextrins.. Lysozymes have primarily a bacteriolytic function; those in tissues and body fluids are associated with the monocyte-macrophage system and enhance the activity of immunoagents. The protein is Lysozyme C (LYZ) of Pavo cristatus (Indian peafowl).